A 1639-amino-acid chain; its full sequence is RIMS-binding protein 3B (1639 aa).

Disordered stretches follow at residues 1–22, 215–240, and 295–364; these read MAKD…SSPA, GSPD…CHAP, and SLDS…LTPS. Positions 21 to 143 form a coiled coil; that stretch reads PAAAVLENQR…ELQRQLAEEL (123 aa). The span at 326–339 shows a compositional bias: pro residues; the sequence is SPPPSPLPPPPPPS. Coiled-coil stretches lie at residues 409-442 and 480-619; these read QADE…QETN and LAKD…AEEN. The disordered stretch occupies residues 697 to 811; that stretch reads CRPGHPPEQP…DRDTASEVDD (115 aa). Polar residues-rich tracts occupy residues 707–718 and 761–775; these read WETSQMPESQVK and SVPQ…SQPL. Over residues 776 to 790 the composition is skewed to low complexity; sequence SKKTSSQSNSSSEGS. Residues 832 to 899 form the SH3 1 domain; that stretch reads PKLKIFMAQY…PSNFVEQIPD (68 aa). Fibronectin type-III domains lie at 995–1083 and 1088–1184; these read APMQ…TLLA and PPLE…IPED. Disordered stretches follow at residues 1251 to 1273, 1292 to 1325, and 1392 to 1413; these read PRRQ…GAGS, QKSP…SPAP, and GTER…QALG. Positions 1293-1305 are enriched in polar residues; the sequence is KSPQNHRPPSVSD. The span at 1392–1406 shows a compositional bias: basic and acidic residues; sequence GTERREERREPEPHS. SH3 domains are found at residues 1452-1520 and 1569-1636; these read TPAR…EMEV and WTPK…HMSL.

Belongs to the RIMBP family. Interacts with LRGUK (via guanylate kinase-like domain). Interacts (via C-terminus) with HOOK1 (via coiled-coil region).

It is found in the cytoplasm. The protein resides in the cytoskeleton. In terms of biological role, probable component of the manchette, a microtubule-based structure which plays a key role in sperm head morphogenesis during late stages of sperm development. In Homo sapiens (Human), this protein is RIMS-binding protein 3B (RIMBP3B).